A 174-amino-acid polypeptide reads, in one-letter code: Magnetosome protein MamT (174 aa).

The Cytoplasmic portion of the chain corresponds to M1–R9. The chain crosses the membrane as a helical span at residues W10 to W28. Residues D29 to L174 are Lumenal-facing. Residues V87–M107 carry the MCR (magnetochrome) 1 motif. Heme contacts are provided by C101, C104, H105, C152, C155, and H156. Positions I138–I158 match the MCR 2 motif.

The protein belongs to the magnetosome MamT family. It depends on heme as a cofactor.

The protein resides in the magnetosome membrane. Its function is as follows. May play a role in magnetite crystal maturation. May transfer electrons to balance the Fe(2+)-Fe(3+) ratio during magnetite formation. This is Magnetosome protein MamT from Magnetospirillum gryphiswaldense (strain DSM 6361 / JCM 21280 / NBRC 15271 / MSR-1).